The following is a 153-amino-acid chain: MDTGAKLKKGAGERKGGGPKKKPVSRSVKAGLQFPVGRIGRFLKKGRYAQRVGSGAPVYLAAVLEYLAAEVLELAGNAARDNKKNRIIPRHVLLAVRNDEELGKLLAGVTIAHGGVLPNINPVLLPKKAEKAAAAATKEPKSPAKATKSPKKA.

Disordered regions lie at residues 1–27 (MDTG…VSRS) and 131–153 (KAAA…PKKA). A compositionally biased stretch (low complexity) spans 132-147 (AAAAATKEPKSPAKAT). The short motif at 149-152 (SPKK) is the SPKK motif element.

This sequence belongs to the histone H2A family. The nucleosome is a histone octamer containing two molecules each of H2A, H2B, H3 and H4 assembled in one H3-H4 heterotetramer and two H2A-H2B heterodimers. The octamer wraps approximately 147 bp of DNA.

Its subcellular location is the nucleus. The protein localises to the chromosome. Functionally, core component of nucleosome. Nucleosomes wrap and compact DNA into chromatin, limiting DNA accessibility to the cellular machineries which require DNA as a template. Histones thereby play a central role in transcription regulation, DNA repair, DNA replication and chromosomal stability. DNA accessibility is regulated via a complex set of post-translational modifications of histones, also called histone code, and nucleosome remodeling. The sequence is that of Histone H2A from Euphorbia esula (Leafy spurge).